The sequence spans 102 residues: NADH-quinone oxidoreductase subunit K (102 aa).

3 consecutive transmembrane segments (helical) span residues 5–25 (LGHF…GIFL), 31–51 (IVLL…FVAF), and 62–82 (IFVF…LAIL).

Belongs to the complex I subunit 4L family. As to quaternary structure, NDH-1 is composed of 14 different subunits. Subunits NuoA, H, J, K, L, M, N constitute the membrane sector of the complex.

Its subcellular location is the cell inner membrane. It carries out the reaction a quinone + NADH + 5 H(+)(in) = a quinol + NAD(+) + 4 H(+)(out). NDH-1 shuttles electrons from NADH, via FMN and iron-sulfur (Fe-S) centers, to quinones in the respiratory chain. The immediate electron acceptor for the enzyme in this species is believed to be ubiquinone. Couples the redox reaction to proton translocation (for every two electrons transferred, four hydrogen ions are translocated across the cytoplasmic membrane), and thus conserves the redox energy in a proton gradient. The chain is NADH-quinone oxidoreductase subunit K from Albidiferax ferrireducens (strain ATCC BAA-621 / DSM 15236 / T118) (Rhodoferax ferrireducens).